A 415-amino-acid polypeptide reads, in one-letter code: Lipoyl synthase, apicoplast (415 aa).

A signal peptide spans 1–23 (MHFGIPSLFYLYILFSIIMRIKC). [4Fe-4S] cluster contacts are provided by cysteine 153, cysteine 158, cysteine 164, cysteine 179, cysteine 183, cysteine 186, and serine 394. Residues 165–383 (WNIGTATIML…KEEGLKMGFK (219 aa)) enclose the Radical SAM core domain.

This sequence belongs to the radical SAM superfamily. Lipoyl synthase family. It depends on [4Fe-4S] cluster as a cofactor.

It is found in the plastid. The protein localises to the apicoplast. It carries out the reaction [[Fe-S] cluster scaffold protein carrying a second [4Fe-4S](2+) cluster] + N(6)-octanoyl-L-lysyl-[protein] + 2 oxidized [2Fe-2S]-[ferredoxin] + 2 S-adenosyl-L-methionine + 4 H(+) = [[Fe-S] cluster scaffold protein] + N(6)-[(R)-dihydrolipoyl]-L-lysyl-[protein] + 4 Fe(3+) + 2 hydrogen sulfide + 2 5'-deoxyadenosine + 2 L-methionine + 2 reduced [2Fe-2S]-[ferredoxin]. It participates in protein modification; protein lipoylation via endogenous pathway; protein N(6)-(lipoyl)lysine from octanoyl-[acyl-carrier-protein]: step 2/2. Catalyzes the radical-mediated insertion of two sulfur atoms into the C-6 and C-8 positions of the octanoyl moiety bound to the lipoyl domains of lipoate-dependent enzymes, thereby converting the octanoylated domains into lipoylated derivatives. In Plasmodium falciparum (isolate 3D7), this protein is Lipoyl synthase, apicoplast.